A 547-amino-acid polypeptide reads, in one-letter code: Chaperonin GroEL (547 aa).

ATP is bound by residues Thr30–Pro33, Lys51, Asp87–Thr91, Gly415, and Asp495.

This sequence belongs to the chaperonin (HSP60) family. In terms of assembly, forms a cylinder of 14 subunits composed of two heptameric rings stacked back-to-back. Interacts with the co-chaperonin GroES.

The protein resides in the cytoplasm. It catalyses the reaction ATP + H2O + a folded polypeptide = ADP + phosphate + an unfolded polypeptide.. Its function is as follows. Together with its co-chaperonin GroES, plays an essential role in assisting protein folding. The GroEL-GroES system forms a nano-cage that allows encapsulation of the non-native substrate proteins and provides a physical environment optimized to promote and accelerate protein folding. This Thiobacillus denitrificans (strain ATCC 25259 / T1) protein is Chaperonin GroEL.